The chain runs to 290 residues: Arylamine N-acetyltransferase 1 (290 aa).

At Met1 the chain carries N-acetylmethionine. The active-site Acyl-thioester intermediate is the Cys68. Ser103 provides a ligand contact to CoA. Residue 106–107 (VH) participates in substrate binding. Residues His107 and Asp122 contribute to the active site. Tyr208 is a CoA binding site.

The protein belongs to the arylamine N-acetyltransferase family.

The protein resides in the cytoplasm. The enzyme catalyses an arylamine + acetyl-CoA = an N-acetylarylamine + CoA. Functionally, participates in the detoxification of a plethora of hydrazine and arylamine drugs. Acetylates both arylamines and arylalkylamines. This Rattus norvegicus (Rat) protein is Arylamine N-acetyltransferase 1 (Nat1).